The primary structure comprises 344 residues: uncharacterized protein (344 aa).

This sequence belongs to the glycosyltransferase 2 family.

Its function is as follows. May be involved in the production of the exopolysaccharide (EPS) component of the extracellular matrix during biofilm formation. EPS is responsible for the adhesion of chains of cells into bundles. This is an uncharacterized protein from Bacillus subtilis (strain 168).